The sequence spans 275 residues: WIMGHMVNEIYQIDEFVDLGANSIETDITFDDDAMAEYSYHGVPCDCMRWCHKWEYVNDFLEGLRRATTPGDSKYRKQLILVVFDLKTGDLSSSTAYKGGKLFAEKLLRYYWNGGSNGGRAYIIISIPDIDHYAFISGFRDALKKSGHEDLLAKVGYDFSGNDDLNSIRSALHKAGVKDREHVWQSGGITNCLLRSLDRVNEAVKNRDSSNGYISKMYYWTIEKYATGRDALNAEVDGIMTNYPDVIVNVLNEDSFKNRFRMATFDDNPWELFKR.

Residue histidine 5 is part of the active site. 2 residues coordinate Mg(2+): glutamate 25 and aspartate 27. The Nucleophile role is filled by histidine 41. 2 disulfides stabilise this stretch: cysteine 45/cysteine 51 and cysteine 47/cysteine 192. Aspartate 85 contributes to the Mg(2+) binding site.

Belongs to the arthropod phospholipase D family. Class II subfamily. Mg(2+) is required as a cofactor. As to expression, expressed by the venom gland.

The protein localises to the secreted. It carries out the reaction an N-(acyl)-sphingosylphosphocholine = an N-(acyl)-sphingosyl-1,3-cyclic phosphate + choline. The catalysed reaction is an N-(acyl)-sphingosylphosphoethanolamine = an N-(acyl)-sphingosyl-1,3-cyclic phosphate + ethanolamine. It catalyses the reaction a 1-acyl-sn-glycero-3-phosphocholine = a 1-acyl-sn-glycero-2,3-cyclic phosphate + choline. The enzyme catalyses a 1-acyl-sn-glycero-3-phosphoethanolamine = a 1-acyl-sn-glycero-2,3-cyclic phosphate + ethanolamine. Its function is as follows. Dermonecrotic toxins cleave the phosphodiester linkage between the phosphate and headgroup of certain phospholipids (sphingolipid and lysolipid substrates), forming an alcohol (often choline) and a cyclic phosphate. This toxin acts on sphingomyelin (SM). It may also act on ceramide phosphoethanolamine (CPE), lysophosphatidylcholine (LPC) and lysophosphatidylethanolamine (LPE), but not on lysophosphatidylserine (LPS), and lysophosphatidylglycerol (LPG). It acts by transphosphatidylation, releasing exclusively cyclic phosphate products as second products. Induces dermonecrosis, hemolysis, increased vascular permeability, edema, inflammatory response, and platelet aggregation. The chain is Dermonecrotic toxin LamSicTox-alphaIV1i from Loxosceles amazonica (Recluse spider).